A 533-amino-acid chain; its full sequence is Glucomannan 4-beta-mannosyltransferase 9 (533 aa).

A helical transmembrane segment spans residues 37–57 (IVPALRLGVYICLTMSVMLFV). Residue aspartate 136 is part of the active site. Positions 195 and 197 each coordinate substrate. Aspartate 289 is a catalytic residue. The next 4 helical transmembrane spans lie at 368 to 388 (LVAH…TVLV), 404 to 426 (VITL…WILF), 483 to 503 (VLEL…AFFG), and 510 to 530 (YLFA…GTIV).

Belongs to the glycosyltransferase 2 family. Plant cellulose synthase-like A subfamily. Expressed in cotyledons at the base of the hypocotyls, in root elongation zone, lateral root primordia, vascular system of young leaves, abscission zone of the pedicle,.

Its subcellular location is the golgi apparatus membrane. The catalysed reaction is GDP-mannose + (glucomannan)n = GDP + (glucomannan)n+1.. Possesses glucomannan synthase and mannan synthase activities in vitro. Mannan synthase consists of a 4-beta-mannosyltransferase activity on mannan using GDP-mannose. The beta-1,4-mannan product is the backbone for galactomannan synthesis by galactomannan galactosyltransferase. Galactomannan is a noncellulosic polysaccharides of plant cell wall. Required for lateral root development. The protein is Glucomannan 4-beta-mannosyltransferase 9 of Arabidopsis thaliana (Mouse-ear cress).